A 158-amino-acid polypeptide reads, in one-letter code: uncharacterized protein (158 aa).

Helical transmembrane passes span 42 to 62, 71 to 91, 102 to 122, and 130 to 150; these read FHFA…GFLY, WIFI…HLIA, LLTG…QMFL, and ELII…PLLF.

Its subcellular location is the cell membrane. This is an uncharacterized protein from Bacillus subtilis (strain 168).